We begin with the raw amino-acid sequence, 257 residues long: Acetylglutamate kinase (257 aa).

Substrate is bound by residues 43–44 (GG), Arg-65, and Asn-157. ATP is bound by residues 180–185 (DVSGIL) and 208–210 (IIT).

Belongs to the acetylglutamate kinase family. ArgB subfamily. In terms of assembly, homodimer.

The protein resides in the cytoplasm. The enzyme catalyses N-acetyl-L-glutamate + ATP = N-acetyl-L-glutamyl 5-phosphate + ADP. Its pathway is amino-acid biosynthesis; L-arginine biosynthesis; N(2)-acetyl-L-ornithine from L-glutamate: step 2/4. Catalyzes the ATP-dependent phosphorylation of N-acetyl-L-glutamate. The polypeptide is Acetylglutamate kinase (Escherichia coli O139:H28 (strain E24377A / ETEC)).